We begin with the raw amino-acid sequence, 444 residues long: Tubulin beta-2 chain (444 aa).

8 residues coordinate GTP: Gln11, Glu69, Ser138, Gly142, Thr143, Gly144, Asn204, and Asn226. Glu69 contacts Mg(2+).

Belongs to the tubulin family. In terms of assembly, dimer of alpha and beta chains. A typical microtubule is a hollow water-filled tube with an outer diameter of 25 nm and an inner diameter of 15 nM. Alpha-beta heterodimers associate head-to-tail to form protofilaments running lengthwise along the microtubule wall with the beta-tubulin subunit facing the microtubule plus end conferring a structural polarity. Microtubules usually have 13 protofilaments but different protofilament numbers can be found in some organisms and specialized cells. Mg(2+) is required as a cofactor.

Its subcellular location is the cytoplasm. The protein resides in the cytoskeleton. In terms of biological role, tubulin is the major constituent of microtubules, a cylinder consisting of laterally associated linear protofilaments composed of alpha- and beta-tubulin heterodimers. Microtubules grow by the addition of GTP-tubulin dimers to the microtubule end, where a stabilizing cap forms. Below the cap, tubulin dimers are in GDP-bound state, owing to GTPase activity of alpha-tubulin. This is Tubulin beta-2 chain (TUBB2) from Zea mays (Maize).